The chain runs to 105 residues: Large ribosomal subunit protein uL24 (105 aa).

This sequence belongs to the universal ribosomal protein uL24 family. In terms of assembly, part of the 50S ribosomal subunit.

One of two assembly initiator proteins, it binds directly to the 5'-end of the 23S rRNA, where it nucleates assembly of the 50S subunit. Functionally, one of the proteins that surrounds the polypeptide exit tunnel on the outside of the subunit. This Staphylococcus epidermidis (strain ATCC 35984 / DSM 28319 / BCRC 17069 / CCUG 31568 / BM 3577 / RP62A) protein is Large ribosomal subunit protein uL24.